Consider the following 124-residue polypeptide: Small ribosomal subunit protein uS12 (124 aa).

3-methylthioaspartic acid is present on Asp89.

This sequence belongs to the universal ribosomal protein uS12 family. As to quaternary structure, part of the 30S ribosomal subunit. Contacts proteins S8 and S17. May interact with IF1 in the 30S initiation complex.

Functionally, with S4 and S5 plays an important role in translational accuracy. In terms of biological role, interacts with and stabilizes bases of the 16S rRNA that are involved in tRNA selection in the A site and with the mRNA backbone. Located at the interface of the 30S and 50S subunits, it traverses the body of the 30S subunit contacting proteins on the other side and probably holding the rRNA structure together. The combined cluster of proteins S8, S12 and S17 appears to hold together the shoulder and platform of the 30S subunit. The polypeptide is Small ribosomal subunit protein uS12 (Erwinia tasmaniensis (strain DSM 17950 / CFBP 7177 / CIP 109463 / NCPPB 4357 / Et1/99)).